Reading from the N-terminus, the 510-residue chain is NAD(P)H-quinone oxidoreductase subunit 2 A, chloroplastic (510 aa).

13 helical membrane-spanning segments follow: residues 24-44 (LLLF…GLIL), 57-77 (MPWL…ALLF), 99-119 (IFQF…VEYI), 124-144 (MAIT…MFLC), 149-169 (LITI…LSGY), 183-203 (YLLM…WLYG), 227-247 (PGIS…LSPA), 295-315 (WHLL…LIAI), 323-343 (MLAY…IVGD), 354-374 (YMLF…LFGL), 395-415 (ALSL…AGFF), 418-438 (LHLF…IGLL), and 482-502 (LSMI…SPII).

The protein belongs to the complex I subunit 2 family. NDH is composed of at least 16 different subunits, 5 of which are encoded in the nucleus.

The protein localises to the plastid. It localises to the chloroplast thylakoid membrane. The enzyme catalyses a plastoquinone + NADH + (n+1) H(+)(in) = a plastoquinol + NAD(+) + n H(+)(out). The catalysed reaction is a plastoquinone + NADPH + (n+1) H(+)(in) = a plastoquinol + NADP(+) + n H(+)(out). Functionally, NDH shuttles electrons from NAD(P)H:plastoquinone, via FMN and iron-sulfur (Fe-S) centers, to quinones in the photosynthetic chain and possibly in a chloroplast respiratory chain. The immediate electron acceptor for the enzyme in this species is believed to be plastoquinone. Couples the redox reaction to proton translocation, and thus conserves the redox energy in a proton gradient. The chain is NAD(P)H-quinone oxidoreductase subunit 2 A, chloroplastic from Populus trichocarpa (Western balsam poplar).